A 254-amino-acid polypeptide reads, in one-letter code: E3 ubiquitin-protein ligase NEURL3 (254 aa).

In terms of domain architecture, NHR spans 17–174 (ALSFHGNATG…TTKAIELLDP (158 aa)). The RING-type zinc finger occupies 197–236 (CVICFHNTANTRLMPCGHSHFCGSCAWHIFKDTARCPICR).

As to expression, expressed in alveolar epithelial type II cells.

The protein resides in the cytoplasm. It catalyses the reaction S-ubiquitinyl-[E2 ubiquitin-conjugating enzyme]-L-cysteine + [acceptor protein]-L-lysine = [E2 ubiquitin-conjugating enzyme]-L-cysteine + N(6)-ubiquitinyl-[acceptor protein]-L-lysine.. The protein operates within protein modification; protein ubiquitination. E3 ubiquitin-protein ligase that plays a role in various biological processes such as lung development or innate immunity. Seems to utilize UBE2E1. Promotes innate antiviral response by catalyzing 'Lys-63'-linked ubiquitination of IRF7. Plays an essential role in TLR4-mediated activation of MAPK pathways by promoting 'Lys-48'-linked polyubiquitination of the phosphatase DUSP1/MKP1. The polypeptide is E3 ubiquitin-protein ligase NEURL3 (Neurl3) (Mus musculus (Mouse)).